We begin with the raw amino-acid sequence, 2677 residues long: Probable helicase senataxin (2677 aa).

Residue lysine 339 forms a Glycyl lysine isopeptide (Lys-Gly) (interchain with G-Cter in SUMO1) linkage. Residues serine 615, serine 642, and serine 878 each carry the phosphoserine modification. Residue lysine 894 forms a Glycyl lysine isopeptide (Lys-Gly) (interchain with G-Cter in SUMO2) linkage. 5 positions are modified to phosphoserine: serine 911, serine 947, serine 956, serine 1017, and serine 1019. Residues lysine 1056 and lysine 1063 each participate in a glycyl lysine isopeptide (Lys-Gly) (interchain with G-Cter in SUMO2) cross-link. Disordered stretches follow at residues 1158–1219 (KKPK…TTVS) and 1237–1258 (PVSK…RSSN). Over residues 1176-1187 (PSSSVRNEGQSD) the composition is skewed to polar residues. The segment covering 1188–1205 (TNKRDLVGNDFKSIDRRT) has biased composition (basic and acidic residues). A compositionally biased stretch (polar residues) spans 1206-1219 (STPNSRIQRATTVS). Phosphoserine is present on serine 1330. Glycyl lysine isopeptide (Lys-Gly) (interchain with G-Cter in SUMO2) cross-links involve residues lysine 1340 and lysine 1341. Positions 1351–1385 (QRQIRPKSQKNRRRLSDCESTDVKRAGSHTAQNSD) are disordered. The segment covering 1354–1363 (IRPKSQKNRR) has biased composition (basic residues). Positions 1364 to 1375 (RLSDCESTDVKR) are enriched in basic and acidic residues. Serine 1366 carries the phosphoserine modification. Lysine 1415 is covalently cross-linked (Glycyl lysine isopeptide (Lys-Gly) (interchain with G-Cter in SUMO2)). Position 1489 is a phosphoserine (serine 1489). The disordered stretch occupies residues 1579-1604 (FRKPGLPPPASKPLRPTTKIFSSKST). A phosphoserine mark is found at serine 1621, serine 1623, and serine 1663. Residue 1963–1970 (GPPGTGKS) coordinates ATP. A Bipartite nuclear localization signal motif is present at residues 2070 to 2087 (KKELPSHVQAMHKRKEFL). The stretch at 2105 to 2136 (REIQRQELDENISKVSKERQELASKIKEVQGR) forms a coiled coil. Phosphothreonine is present on threonine 2474. Disordered regions lie at residues 2474 to 2496 (THPP…SKLD), 2556 to 2577 (WDPQ…EPGF), and 2597 to 2677 (LSSH…RKLL). Over residues 2560–2573 (PSSPQHPGATPPTG) the composition is skewed to pro residues. The span at 2628–2671 (ELCHRREARAFSEGEQEKCGSETHHTRRNSRWDKRTLEQEDSSS) shows a compositional bias: basic and acidic residues. The necessary for nuclear localization stretch occupies residues 2661-2677 (KRTLEQEDSSSKKRKLL).

It belongs to the DNA2/NAM7 helicase family. Homodimer. Interacts with PER2; the interaction inhibits termination of circadian target genes. Interacts with CHD4, POLR2A, PRKDC and TRIM28. Interacts with UBE2I. Interacts (via N-terminus domain) with EXOSC9 (via C-terminus region); the interaction enhances SETX sumoylation. Interacts with NCL (via N-terminus domain). Interacts with PABPN1, PABPC1 and SF3B1. Interacts with SMN1/SMN2 and POLR2A; SMN1/SMN2 recruits SETX to POLR2A. In terms of processing, ubiquitinated. Sumoylated preferentially with SUMO2 or SUMO3. In terms of tissue distribution, highly expressed in skeletal muscle. Expressed in heart, fibroblast, placenta and liver. Weakly expressed in brain and lung. Expressed in the cortex of the kidney (highly expressed in tubular epithelial cells but low expression in the glomerulus).

The protein localises to the nucleus. It localises to the nucleoplasm. It is found in the nucleolus. The protein resides in the cytoplasm. Its subcellular location is the chromosome. The protein localises to the telomere. It localises to the cell projection. It is found in the axon. The protein resides in the growth cone. Its function is as follows. Probable RNA/DNA helicase involved in diverse aspects of RNA metabolism and genomic integrity. Plays a role in transcription regulation by its ability to modulate RNA Polymerase II (Pol II) binding to chromatin and through its interaction with proteins involved in transcription. Contributes to the mRNA splicing efficiency and splice site selection. Required for the resolution of R-loop RNA-DNA hybrid formation at G-rich pause sites located downstream of the poly(A) site, allowing XRN2 recruitment and XRN2-mediated degradation of the downstream cleaved RNA and hence efficient RNA polymerase II (RNAp II) transcription termination. Required for the 3' transcriptional termination of PER1 and CRY2, thus playing an important role in the circadian rhythm regulation. Involved in DNA double-strand breaks damage response generated by oxidative stress. In association with RRP45, targets the RNA exosome complex to sites of transcription-induced DNA damage. Plays a role in the development and maturation of germ cells: essential for male meiosis, acting at the interface of transcription and meiotic recombination, and in the process of gene silencing during meiotic sex chromosome inactivation (MSCI). May be involved in telomeric stability through the regulation of telomere repeat-containing RNA (TERRA) transcription. Plays a role in neurite outgrowth in hippocampal cells through FGF8-activated signaling pathways. Inhibits retinoic acid-induced apoptosis. In Homo sapiens (Human), this protein is Probable helicase senataxin.